The chain runs to 232 residues: MINSDISEQLALMQLSDSFFPTGSFTFSHGLETLVQTGKIQSQPEILYFLQILLRNKVGVSDVVALIHSYRGCKNGDIEAVRVADRMLFVQTAIAKNRETQRQSGRALLMVASSTWQDERLKTLNIDAVSGNIHCLHPVIFGAVTSVVGLDERNAVLAFLHGLVTNILGAAIRLGILGHIQAQQILLQLVPDIEAVWSTAVSMNLEQMWSCTPFIDIAQMQHPKLAHKLFAN.

It belongs to the UreF family. As to quaternary structure, ureD, UreF and UreG form a complex that acts as a GTP-hydrolysis-dependent molecular chaperone, activating the urease apoprotein by helping to assemble the nickel containing metallocenter of UreC. The UreE protein probably delivers the nickel.

Its subcellular location is the cytoplasm. Functionally, required for maturation of urease via the functional incorporation of the urease nickel metallocenter. This Trichodesmium erythraeum (strain IMS101) protein is Urease accessory protein UreF.